An 878-amino-acid polypeptide reads, in one-letter code: Leucine--tRNA ligase (878 aa).

The 'HIGH' region signature appears at 43–53; it reads PYPSGRIHMGH. The 'KMSKS' region motif lies at 630–634; the sequence is KMSKS. An ATP-binding site is contributed by lysine 633.

Belongs to the class-I aminoacyl-tRNA synthetase family.

Its subcellular location is the cytoplasm. It carries out the reaction tRNA(Leu) + L-leucine + ATP = L-leucyl-tRNA(Leu) + AMP + diphosphate. The chain is Leucine--tRNA ligase from Rhodopseudomonas palustris (strain BisB5).